Consider the following 194-residue polypeptide: Ion-translocating oxidoreductase complex subunit A (194 aa).

The next 6 membrane-spanning stretches (helical) occupy residues L4–G24, I39–L59, L72–V92, V102–L122, G135–M155, and A172–I192.

It belongs to the NqrDE/RnfAE family. The complex is composed of six subunits: RnfA, RnfB, RnfC, RnfD, RnfE and RnfG.

It is found in the cell inner membrane. Its function is as follows. Part of a membrane-bound complex that couples electron transfer with translocation of ions across the membrane. This chain is Ion-translocating oxidoreductase complex subunit A, found in Azotobacter vinelandii (strain DJ / ATCC BAA-1303).